The sequence spans 193 residues: ATP-dependent Clp protease proteolytic subunit (193 aa).

The active-site Nucleophile is the Ser-98. Residue His-123 is part of the active site.

Belongs to the peptidase S14 family. Fourteen ClpP subunits assemble into 2 heptameric rings which stack back to back to give a disk-like structure with a central cavity, resembling the structure of eukaryotic proteasomes.

It localises to the cytoplasm. It catalyses the reaction Hydrolysis of proteins to small peptides in the presence of ATP and magnesium. alpha-casein is the usual test substrate. In the absence of ATP, only oligopeptides shorter than five residues are hydrolyzed (such as succinyl-Leu-Tyr-|-NHMec, and Leu-Tyr-Leu-|-Tyr-Trp, in which cleavage of the -Tyr-|-Leu- and -Tyr-|-Trp bonds also occurs).. Cleaves peptides in various proteins in a process that requires ATP hydrolysis. Has a chymotrypsin-like activity. Plays a major role in the degradation of misfolded proteins. This Histophilus somni (strain 2336) (Haemophilus somnus) protein is ATP-dependent Clp protease proteolytic subunit.